We begin with the raw amino-acid sequence, 530 residues long: Cytochrome P450 monooxygenase ausG (530 aa).

The helical transmembrane segment at 31-51 (LLVAYRLPGLLLLFSITIILF) threads the bilayer. Heme is bound at residue Cys-470.

This sequence belongs to the cytochrome P450 family. It depends on heme as a cofactor.

It is found in the membrane. It functions in the pathway secondary metabolite biosynthesis; terpenoid biosynthesis. In terms of biological role, cytochrome P450 monooxygenase; part of the gene cluster B that mediates the biosynthesis of the fungal meroterpenoid acetoxydehydroaustin. The first step of the pathway is the synthesis of 3,5-dimethylorsellinic acid by the polyketide synthase ausA. 3,5-dimethylorsellinic acid is then prenylated by the polyprenyl transferase ausN. Further epoxidation by the FAD-dependent monooxygenase ausM and cyclization by the probable terpene cyclase ausL lead to the formation of protoaustinoid A. Protoaustinoid A is then oxidized to spiro-lactone preaustinoid A3 by the combined action of the FAD-binding monooxygenases ausB and ausC, and the dioxygenase ausE. Acid-catalyzed keto-rearrangement and ring contraction of the tetraketide portion of preaustinoid A3 by ausJ lead to the formation of preaustinoid A4. The aldo-keto reductase ausK, with the help of ausH, is involved in the next step by transforming preaustinoid A4 into isoaustinone which is in turn hydroxylated by the P450 monooxygenase ausI to form austinolide. The cytochrome P450 monooxygenase ausG then modifies austinolide to austinol. Austinol is further acetylated to austin by the O-acetyltransferase ausP, which spontaneously changes to dehydroaustin. The cytochrome P450 monooxygenase then converts dehydroaustin is into 7-dehydrodehydroaustin. The hydroxylation catalyzed by ausR permits the second O-acetyltransferase ausQ to add an additional acetyl group to the molecule, leading to the formation of acetoxydehydroaustin. Due to genetic rearrangements of the clusters and the subsequent loss of some enzymes, the end product of the Penicillium brasilianum austinoid biosynthesis clusters is acetoxydehydroaustin. In Penicillium brasilianum, this protein is Cytochrome P450 monooxygenase ausG.